The chain runs to 246 residues: tRNA pseudouridine synthase A (246 aa).

The active-site Nucleophile is aspartate 52. Position 111 (tyrosine 111) interacts with substrate.

This sequence belongs to the tRNA pseudouridine synthase TruA family. In terms of assembly, homodimer.

The catalysed reaction is uridine(38/39/40) in tRNA = pseudouridine(38/39/40) in tRNA. In terms of biological role, formation of pseudouridine at positions 38, 39 and 40 in the anticodon stem and loop of transfer RNAs. This Borreliella burgdorferi (strain ATCC 35210 / DSM 4680 / CIP 102532 / B31) (Borrelia burgdorferi) protein is tRNA pseudouridine synthase A.